The sequence spans 164 residues: MPAGHGVRARTRDLFARPFRKKGYIPLSTYLRTFKVGDYVDVKVNGAIHKGMPHKFYHGRTGRIWNVTKRAVGVEVNKQIGNRIIRKRIHVRVEHVQQSRCAEEFKLRKKQNDVLKADAKARGETISTKRQPKGPKPGFMVEGMTLETVTPIPYDVVNDLKGGY.

The protein belongs to the eukaryotic ribosomal protein eL21 family.

The protein is Large ribosomal subunit protein eL21x/eL21w (RPL21E) of Arabidopsis thaliana (Mouse-ear cress).